A 511-amino-acid polypeptide reads, in one-letter code: Histidine ammonia-lyase (511 aa).

Residues 142–144 (ASG) constitute a cross-link (5-imidazolinone (Ala-Gly)). Ser-143 carries the post-translational modification 2,3-didehydroalanine (Ser).

The protein belongs to the PAL/histidase family. In terms of processing, contains an active site 4-methylidene-imidazol-5-one (MIO), which is formed autocatalytically by cyclization and dehydration of residues Ala-Ser-Gly.

The protein resides in the cytoplasm. It catalyses the reaction L-histidine = trans-urocanate + NH4(+). It participates in amino-acid degradation; L-histidine degradation into L-glutamate; N-formimidoyl-L-glutamate from L-histidine: step 1/3. In Rhizobium rhizogenes (Agrobacterium rhizogenes), this protein is Histidine ammonia-lyase.